The primary structure comprises 340 residues: Protein RecA (340 aa).

67–74 serves as a coordination point for ATP; it reads GNESSGKT.

Belongs to the RecA family.

The protein localises to the cytoplasm. Can catalyze the hydrolysis of ATP in the presence of single-stranded DNA, the ATP-dependent uptake of single-stranded DNA by duplex DNA, and the ATP-dependent hybridization of homologous single-stranded DNAs. It interacts with LexA causing its activation and leading to its autocatalytic cleavage. This is Protein RecA from Mycoplasma genitalium (strain ATCC 33530 / DSM 19775 / NCTC 10195 / G37) (Mycoplasmoides genitalium).